Here is a 199-residue protein sequence, read N- to C-terminus: MSQNSNSENPSPRKKRYVKMCDLTEEQKERRRSINRRASKNFLKRRRIFEEQQEKGLINLKYENSRLRCQVEKRKDEIRILREWLNYHKCTTLQNYNTGPPEPRVKVENSLEMQCATAFLNLDQQYTTNNLNIPETVSGNNTTNGFAAATATLHTNCYEKTLANNTNNFEAKLNCEVLPSFTSALDDLLSIDWNNLYNL.

This is an uncharacterized protein from Connochaetes taurinus (Blue wildebeest).